We begin with the raw amino-acid sequence, 131 residues long: D-ribose pyranase (131 aa).

Residue H20 is the Proton donor of the active site. Substrate contacts are provided by residues D28, H98, and F120–N122.

It belongs to the RbsD / FucU family. RbsD subfamily. As to quaternary structure, homodecamer.

It is found in the cytoplasm. It catalyses the reaction beta-D-ribopyranose = beta-D-ribofuranose. The protein operates within carbohydrate metabolism; D-ribose degradation; D-ribose 5-phosphate from beta-D-ribopyranose: step 1/2. Catalyzes the interconversion of beta-pyran and beta-furan forms of D-ribose. This Petrotoga mobilis (strain DSM 10674 / SJ95) protein is D-ribose pyranase.